We begin with the raw amino-acid sequence, 453 residues long: Aldehyde dehydrogenase, dimeric NADP-preferring (453 aa).

Residue serine 2 is modified to N-acetylserine. Residue lysine 178 is modified to N6-acetyllysine. Residue 188–193 (GSTAVG) participates in NAD(+) binding. Lysine 194 bears the N6-acetyllysine mark. Active-site residues include glutamate 210 and cysteine 244.

This sequence belongs to the aldehyde dehydrogenase family. Homodimer.

The protein localises to the cytoplasm. It carries out the reaction an aldehyde + NAD(+) + H2O = a carboxylate + NADH + 2 H(+). The enzyme catalyses octanal + NAD(+) + H2O = octanoate + NADH + 2 H(+). In terms of biological role, ALDHs play a major role in the detoxification of alcohol-derived acetaldehyde. They are involved in the metabolism of corticosteroids, biogenic amines, neurotransmitters, and lipid peroxidation. Oxidizes medium and long chain aldehydes into non-toxic fatty acids. Preferentially oxidizes aromatic aldehyde substrates. Comprises about 50 percent of corneal epithelial soluble proteins. May play a role in preventing corneal damage caused by ultraviolet light. The sequence is that of Aldehyde dehydrogenase, dimeric NADP-preferring (Aldh3a1) from Rattus norvegicus (Rat).